Reading from the N-terminus, the 248-residue chain is Type III pantothenate kinase (248 aa).

An ATP-binding site is contributed by 6-13 (DCGNSFIK). Substrate contacts are provided by residues Tyr92 and 99–102 (GLDR). Asp101 functions as the Proton acceptor in the catalytic mechanism. Residue Asp121 participates in K(+) binding. Thr124 lines the ATP pocket. Thr180 contacts substrate.

It belongs to the type III pantothenate kinase family. Homodimer. NH4(+) serves as cofactor. The cofactor is K(+).

It localises to the cytoplasm. The enzyme catalyses (R)-pantothenate + ATP = (R)-4'-phosphopantothenate + ADP + H(+). Its pathway is cofactor biosynthesis; coenzyme A biosynthesis; CoA from (R)-pantothenate: step 1/5. Catalyzes the phosphorylation of pantothenate (Pan), the first step in CoA biosynthesis. The polypeptide is Type III pantothenate kinase (Ectopseudomonas mendocina (strain ymp) (Pseudomonas mendocina)).